We begin with the raw amino-acid sequence, 758 residues long: Relaxin receptor 1 (758 aa).

Topologically, residues 1-408 are extracellular; sequence MTSGPFFFCV…LENLLASIIQ (408 aa). One can recognise an LDL-receptor class A domain in the interval 26–63; the sequence is SCPLGSFPCGNISKCLPQLLHCNGVDDCGNQADEDNCG. Disulfide bonds link Cys27–Cys40, Cys34–Cys53, and Cys47–Cys62. N-linked (GlcNAc...) asparagine glycosylation is present at Asn36. Residues Leu45, Asn48, Val50, Asp52, Asp58, and Glu59 each contribute to the Ca(2+) site. LRR repeat units follow at residues 105–125, 126–148, 149–172, 173–196, 198–220, 221–244, 246–269, 270–293, 294–317, 319–341, and 342–365; these read LCRD…PSVS, SNVT…SFRK, YHDL…AFRG, LHSL…VFED, HRLE…TFYG, LNSL…PLCQ, MPRL…TFIS, CNNL…AFTH, LQKL…IFKD, KELS…QFDY, and LAKL…MFRP. The N-linked (GlcNAc...) asparagine glycan is linked to Asn127. Asn264 and Asn272 each carry an N-linked (GlcNAc...) asparagine glycan. Asn325 is a glycosylation site (N-linked (GlcNAc...) asparagine). Asn368 is a glycosylation site (N-linked (GlcNAc...) asparagine). The chain crosses the membrane as a helical span at residues 409–429; sequence RVFVWVVSAITCFGNIFVICM. The Cytoplasmic segment spans residues 430–443; that stretch reads RPYIRSENKLHAMS. Residues 444 to 464 form a helical membrane-spanning segment; the sequence is IMSLCCADCLMGVYLFVIGAF. The Extracellular segment spans residues 465–486; it reads DLKFRGEYRKHAQPWMESVHCQ. An intrachain disulfide couples Cys485 to Cys563. Residues 487–507 form a helical membrane-spanning segment; it reads FMGSLAVLSTEVSVLLLTFLT. Residues 508-527 lie on the Cytoplasmic side of the membrane; it reads LEKYICIVYPFRCLRPRKCR. The chain crosses the membrane as a helical span at residues 528 to 548; it reads TVAVLIFIWITGFIVAFAPLG. Topologically, residues 549–577 are extracellular; that stretch reads NKEFFKNYYGTNGVCFPLHSEDTGSTGAQ. A helical transmembrane segment spans residues 578–598; that stretch reads IYSVVIFLGINLVAFIIIVFS. Residues 599 to 629 lie on the Cytoplasmic side of the membrane; it reads YGSMFYSVHQSTITATEIQKQVKKEMILAKR. A helical membrane pass occupies residues 630-650; it reads FFFIVFTDALCWIPIFILKFL. At 651 to 660 the chain is on the extracellular side; it reads SLIRVEIPDT. Residues 661 to 681 form a helical membrane-spanning segment; it reads ITSWVVIFILPINSALNPIIY. Topologically, residues 682 to 758 are cytoplasmic; that stretch reads TLTTRPFKEM…SRSSRLNSYS (77 aa).

The protein belongs to the G-protein coupled receptor 1 family. Interacts with C1QTNF8. Detected in brain cortex, and at low levels in testis.

Its subcellular location is the cell membrane. In terms of biological role, receptor for relaxins. The activity of this receptor is mediated by G proteins leading to stimulation of adenylate cyclase and an increase of cAMP. Binding of the ligand may also activate a tyrosine kinase pathway that inhibits the activity of a phosphodiesterase that degrades cAMP. This Rattus norvegicus (Rat) protein is Relaxin receptor 1 (Rxfp1).